Reading from the N-terminus, the 419-residue chain is UDP-N-acetylglucosamine 1-carboxyvinyltransferase (419 aa).

Residue Lys-22–Asn-23 coordinates phosphoenolpyruvate. Residue Arg-95 participates in UDP-N-acetyl-alpha-D-glucosamine binding. Catalysis depends on Cys-119, which acts as the Proton donor. Cys-119 is subject to 2-(S-cysteinyl)pyruvic acid O-phosphothioketal. Residues Lys-164–Val-167, Asp-308, and Ile-330 each bind UDP-N-acetyl-alpha-D-glucosamine.

The protein belongs to the EPSP synthase family. MurA subfamily.

Its subcellular location is the cytoplasm. The enzyme catalyses phosphoenolpyruvate + UDP-N-acetyl-alpha-D-glucosamine = UDP-N-acetyl-3-O-(1-carboxyvinyl)-alpha-D-glucosamine + phosphate. It functions in the pathway cell wall biogenesis; peptidoglycan biosynthesis. Functionally, cell wall formation. Adds enolpyruvyl to UDP-N-acetylglucosamine. In Rickettsia massiliae (strain Mtu5), this protein is UDP-N-acetylglucosamine 1-carboxyvinyltransferase.